A 723-amino-acid chain; its full sequence is Fatty acid oxidation complex subunit alpha (723 aa).

The segment at 1–189 (MIYQAETLQV…KIGLLDAVVD (189 aa)) is enoyl-CoA hydratase/isomerase. A substrate-binding site is contributed by Asp-296. The segment at 311-723 (SKDTQRAAVL…FYGAQQQGSI (413 aa)) is 3-hydroxyacyl-CoA dehydrogenase. Residues Met-325, Asp-344, 401 to 403 (VVE), Lys-408, and Ser-430 contribute to the NAD(+) site. The active-site For 3-hydroxyacyl-CoA dehydrogenase activity is the His-451. Asn-454 is a binding site for NAD(+). Residues Asn-501 and Tyr-661 each contribute to the substrate site.

In the N-terminal section; belongs to the enoyl-CoA hydratase/isomerase family. The protein in the C-terminal section; belongs to the 3-hydroxyacyl-CoA dehydrogenase family. In terms of assembly, heterotetramer of two alpha chains (FadB) and two beta chains (FadA).

It carries out the reaction a (3S)-3-hydroxyacyl-CoA + NAD(+) = a 3-oxoacyl-CoA + NADH + H(+). The catalysed reaction is a (3S)-3-hydroxyacyl-CoA = a (2E)-enoyl-CoA + H2O. The enzyme catalyses a 4-saturated-(3S)-3-hydroxyacyl-CoA = a (3E)-enoyl-CoA + H2O. It catalyses the reaction (3S)-3-hydroxybutanoyl-CoA = (3R)-3-hydroxybutanoyl-CoA. It carries out the reaction a (3Z)-enoyl-CoA = a 4-saturated (2E)-enoyl-CoA. The catalysed reaction is a (3E)-enoyl-CoA = a 4-saturated (2E)-enoyl-CoA. Its pathway is lipid metabolism; fatty acid beta-oxidation. Involved in the aerobic and anaerobic degradation of long-chain fatty acids via beta-oxidation cycle. Catalyzes the formation of 3-oxoacyl-CoA from enoyl-CoA via L-3-hydroxyacyl-CoA. It can also use D-3-hydroxyacyl-CoA and cis-3-enoyl-CoA as substrate. This Vibrio campbellii (strain ATCC BAA-1116) protein is Fatty acid oxidation complex subunit alpha.